Consider the following 270-residue polypeptide: Tryptophan synthase alpha chain (270 aa).

Catalysis depends on proton acceptor residues Glu-49 and Asp-60.

The protein belongs to the TrpA family. In terms of assembly, tetramer of two alpha and two beta chains.

The catalysed reaction is (1S,2R)-1-C-(indol-3-yl)glycerol 3-phosphate + L-serine = D-glyceraldehyde 3-phosphate + L-tryptophan + H2O. Its pathway is amino-acid biosynthesis; L-tryptophan biosynthesis; L-tryptophan from chorismate: step 5/5. In terms of biological role, the alpha subunit is responsible for the aldol cleavage of indoleglycerol phosphate to indole and glyceraldehyde 3-phosphate. The polypeptide is Tryptophan synthase alpha chain (Pseudomonas syringae pv. tomato (strain ATCC BAA-871 / DC3000)).